A 176-amino-acid chain; its full sequence is KxDL motif-containing protein 1 (176 aa).

Residue methionine 1 is modified to N-acetylmethionine. The tract at residues 95-176 (HPEAFSHIPE…HTDDEEMPGE (82 aa)) is disordered. Over residues 119–131 (STTTTIATSEQST) the composition is skewed to low complexity. Over residues 132-145 (GSCDTSPDTVSPSL) the composition is skewed to polar residues.

Belongs to the KXD1 family. In terms of assembly, component of the BLOC-one-related complex (BORC) which is composed of BLOC1S1, BLOC1S2, BORCS5, BORCS6, BORCS7, BORCS8, KXD1 and SNAPIN. Associates with the BLOC-1 complex. Interacts with BLOC1S1. Interacts with DTNBP1/BLOC1S7 (via coiled-coil domain).

Its subcellular location is the lysosome membrane. Its function is as follows. As part of the BORC complex may play a role in lysosomes movement and localization at the cell periphery. Associated with the cytosolic face of lysosomes, the BORC complex may recruit ARL8B and couple lysosomes to microtubule plus-end-directed kinesin motor. May also be involved in the biogenesis of lysosome-related organelles such as melanosomes. The protein is KxDL motif-containing protein 1 (KXD1) of Bos taurus (Bovine).